The chain runs to 129 residues: Glycine cleavage system H protein (129 aa).

Positions 24–106 (TVVVGVTSYA…YGDGWLIKVR (83 aa)) constitute a Lipoyl-binding domain. K65 is modified (N6-lipoyllysine).

The protein belongs to the GcvH family. As to quaternary structure, the glycine cleavage system is composed of four proteins: P, T, L and H. Requires (R)-lipoate as cofactor.

In terms of biological role, the glycine cleavage system catalyzes the degradation of glycine. The H protein shuttles the methylamine group of glycine from the P protein to the T protein. The protein is Glycine cleavage system H protein of Gloeobacter violaceus (strain ATCC 29082 / PCC 7421).